A 256-amino-acid polypeptide reads, in one-letter code: Trypsin epsilon (256 aa).

A signal peptide spans 1–22 (MLKIAVLLSVLACALAGTIPDG). The propeptide at 23–30 (LLPQLDGR) is activation peptide. The Peptidase S1 domain maps to 31 to 254 (IVGGYETSID…FHEWIERTAR (224 aa)). An intrachain disulfide couples Cys-56 to Cys-72. Catalysis depends on charge relay system residues His-71 and Asp-116. 2 disulfide bridges follow: Cys-180-Cys-197 and Cys-206-Cys-230. Residue Ser-210 is the Charge relay system of the active site.

This sequence belongs to the peptidase S1 family.

It localises to the secreted. It is found in the extracellular space. It carries out the reaction Preferential cleavage: Arg-|-Xaa, Lys-|-Xaa.. The polypeptide is Trypsin epsilon (epsilonTry) (Drosophila erecta (Fruit fly)).